Consider the following 205-residue polypeptide: Methylamine utilization protein MauD (205 aa).

A helical membrane pass occupies residues 5–25 (IMIASNVLLWGAFLALAALML). The Thioredoxin domain occupies 50–184 (PDIGERSPVF…VESLFETTRV (135 aa)).

The protein resides in the membrane. It functions in the pathway one-carbon metabolism; methylamine degradation. In terms of biological role, may be specifically involved in the processing, transport, and/or maturation of the MADH beta-subunit. The sequence is that of Methylamine utilization protein MauD (mauD) from Methylobacillus flagellatus (strain ATCC 51484 / DSM 6875 / VKM B-1610 / KT).